The sequence spans 414 residues: Glyceraldehyde-3-phosphate dehydrogenase, chloroplastic (414 aa).

The N-terminal 76 residues, 1-76 (MAFVAPVATV…GIVAATFGPT (76 aa)), are a transit peptide targeting the chloroplast. Residues 88 to 89 (RI), Asp-112, and Arg-156 each bind NADP(+). Residues 230-232 (SCT), Thr-261, Arg-276, 289-290 (TG), and Arg-312 each bind D-glyceraldehyde 3-phosphate. The active-site Nucleophile is Cys-231. Residue Asn-394 coordinates NADP(+).

It belongs to the glyceraldehyde-3-phosphate dehydrogenase family. In terms of assembly, homotetramer.

Its subcellular location is the plastid. It localises to the chloroplast. The enzyme catalyses D-glyceraldehyde 3-phosphate + phosphate + NADP(+) = (2R)-3-phospho-glyceroyl phosphate + NADPH + H(+). It functions in the pathway carbohydrate biosynthesis; Calvin cycle. This is Glyceraldehyde-3-phosphate dehydrogenase, chloroplastic (GAPA) from Chondrus crispus (Carrageen Irish moss).